Reading from the N-terminus, the 88-residue chain is HssA/B-like protein 64 (88 aa).

The segment covering 1-24 has biased composition (low complexity); the sequence is MTLFSSISSMSSSMTSSKSSFASF. Disordered stretches follow at residues 1-25 and 45-88; these read MTLF…ASFG and GVSS…GNSC. Residues 56–66 show a composition bias toward gly residues; that stretch reads AKSGGDCGGKG.

It belongs to the hssA/B family.

This chain is HssA/B-like protein 64 (hssl64), found in Dictyostelium discoideum (Social amoeba).